The chain runs to 167 residues: Urease accessory protein UreE (167 aa).

This sequence belongs to the UreE family.

Its subcellular location is the cytoplasm. Involved in urease metallocenter assembly. Binds nickel. Probably functions as a nickel donor during metallocenter assembly. This chain is Urease accessory protein UreE, found in Pseudomonas paraeruginosa (strain DSM 24068 / PA7) (Pseudomonas aeruginosa (strain PA7)).